We begin with the raw amino-acid sequence, 260 residues long: NAD-capped RNA hydrolase NudC (260 aa).

Arg-69 contributes to the substrate binding site. Zn(2+) is bound by residues Cys-98 and Cys-101. Substrate is bound at residue Glu-111. 2 residues coordinate Zn(2+): Cys-116 and Cys-119. Tyr-124 contacts substrate. The 124-residue stretch at 125 to 248 (PQIAPCIIVA…TVARRLIEDT (124 aa)) folds into the Nudix hydrolase domain. Residues Ala-158, Glu-174, and Glu-178 each coordinate a divalent metal cation. Residues 159 to 180 (GFVEVGETLEQTVVREVMEESQ) carry the Nudix box motif. Residue 192–199 (QPWPFPHS) participates in substrate binding. Glu-219 serves as a coordination point for a divalent metal cation. Substrate is bound at residue Ala-241.

Belongs to the Nudix hydrolase family. NudC subfamily. Homodimer. Mg(2+) serves as cofactor. The cofactor is Mn(2+). Requires Zn(2+) as cofactor.

It catalyses the reaction a 5'-end NAD(+)-phospho-ribonucleoside in mRNA + H2O = a 5'-end phospho-adenosine-phospho-ribonucleoside in mRNA + beta-nicotinamide D-ribonucleotide + 2 H(+). The catalysed reaction is NAD(+) + H2O = beta-nicotinamide D-ribonucleotide + AMP + 2 H(+). The enzyme catalyses NADH + H2O = reduced beta-nicotinamide D-ribonucleotide + AMP + 2 H(+). In terms of biological role, mRNA decapping enzyme that specifically removes the nicotinamide adenine dinucleotide (NAD) cap from a subset of mRNAs by hydrolyzing the diphosphate linkage to produce nicotinamide mononucleotide (NMN) and 5' monophosphate mRNA. The NAD-cap is present at the 5'-end of some mRNAs and stabilizes RNA against 5'-processing. Has preference for mRNAs with a 5'-end purine. Catalyzes the hydrolysis of a broad range of dinucleotide pyrophosphates. The protein is NAD-capped RNA hydrolase NudC of Pectobacterium atrosepticum (strain SCRI 1043 / ATCC BAA-672) (Erwinia carotovora subsp. atroseptica).